The primary structure comprises 252 residues: Small ribosomal subunit protein eS4 (252 aa).

The S4 RNA-binding domain maps to 43-106; sequence LPLLILVRDM…NKYYRVIPVP (64 aa).

It belongs to the eukaryotic ribosomal protein eS4 family.

This chain is Small ribosomal subunit protein eS4, found in Desulfurococcus amylolyticus (strain DSM 18924 / JCM 16383 / VKM B-2413 / 1221n) (Desulfurococcus kamchatkensis).